We begin with the raw amino-acid sequence, 347 residues long: Isopentenyl-diphosphate delta-isomerase (347 aa).

Residue 9-10 coordinates substrate; sequence RK. Residues Ser67, 68–70, Ser98, and Asn127 contribute to the FMN site; that span reads SMT. Residue 98-100 coordinates substrate; it reads SQR. Gln162 lines the substrate pocket. Glu163 serves as a coordination point for Mg(2+). FMN-binding positions include Lys194, Thr224, 274 to 276, and 295 to 296; these read GIK and AA.

It belongs to the IPP isomerase type 2 family. In terms of assembly, homooctamer. Dimer of tetramers. The cofactor is FMN. NADPH serves as cofactor. It depends on Mg(2+) as a cofactor.

Its subcellular location is the cytoplasm. The enzyme catalyses isopentenyl diphosphate = dimethylallyl diphosphate. Involved in the biosynthesis of isoprenoids. Catalyzes the 1,3-allylic rearrangement of the homoallylic substrate isopentenyl (IPP) to its allylic isomer, dimethylallyl diphosphate (DMAPP). The polypeptide is Isopentenyl-diphosphate delta-isomerase (Pseudescherichia vulneris (Escherichia vulneris)).